Here is a 260-residue protein sequence, read N- to C-terminus: Metallo-beta-lactamase domain-containing protein 1 (260 aa).

Zn(2+)-binding residues include histidine 118, histidine 120, aspartate 122, histidine 123, histidine 173, aspartate 196, and histidine 235.

It belongs to the metallo-beta-lactamase superfamily. Glyoxalase II family. In terms of assembly, homodimer. Zn(2+) serves as cofactor.

Its subcellular location is the cytoplasm. It localises to the cytosol. The protein localises to the nucleus. The enzyme catalyses a ribonucleotidyl-ribonucleotide-RNA + H2O = a 3'-end ribonucleotide-RNA + a 5'-end 5'-phospho-ribonucleoside-RNA + H(+). In terms of biological role, endoribonuclease that catalyzes the hydrolysis of histone-coding pre-mRNA 3'-end. Involved in histone pre-mRNA processing during the S-phase of the cell cycle, which is required for entering/progressing through S-phase. Cleaves histone pre-mRNA at a major and a minor cleavage site after the 5'-ACCCA-3' and the 5'-ACCCACA-3' sequence, respectively, and located downstream of the stem-loop. May require the presence of the HDE element located at the histone pre-RNA 3'-end to avoid non-specific cleavage. The sequence is that of Metallo-beta-lactamase domain-containing protein 1 from Mus musculus (Mouse).